Reading from the N-terminus, the 548-residue chain is Membrane protein insertase YidC (548 aa).

The helical transmembrane segment at 6–26 threads the bilayer; the sequence is NLLVIALLFVSFMIWQAWEQD. The segment at 28 to 56 is disordered; sequence NPQPQTQQTTQTTTTAAGSAADQGVPASG. The span at 29 to 42 shows a compositional bias: low complexity; that stretch reads PQPQTQQTTQTTTT. 4 consecutive transmembrane segments (helical) span residues 350-370, 424-444, 458-478, and 499-519; these read FVGN…GIMY, FPLI…MGSI, LSAQ…MFFI, and PVIF…YYIV.

It belongs to the OXA1/ALB3/YidC family. Type 1 subfamily. Interacts with the Sec translocase complex via SecD. Specifically interacts with transmembrane segments of nascent integral membrane proteins during membrane integration.

The protein localises to the cell inner membrane. Required for the insertion and/or proper folding and/or complex formation of integral membrane proteins into the membrane. Involved in integration of membrane proteins that insert both dependently and independently of the Sec translocase complex, as well as at least some lipoproteins. Aids folding of multispanning membrane proteins. The chain is Membrane protein insertase YidC from Salmonella choleraesuis (strain SC-B67).